Consider the following 183-residue polypeptide: Glutathione-regulated potassium-efflux system ancillary protein KefG (183 aa).

Belongs to the NAD(P)H dehydrogenase (quinone) family. KefG subfamily. In terms of assembly, interacts with KefB.

It is found in the cell inner membrane. The enzyme catalyses a quinone + NADH + H(+) = a quinol + NAD(+). It carries out the reaction a quinone + NADPH + H(+) = a quinol + NADP(+). Its function is as follows. Regulatory subunit of a potassium efflux system that confers protection against electrophiles. Required for full activity of KefB. The protein is Glutathione-regulated potassium-efflux system ancillary protein KefG of Serratia proteamaculans (strain 568).